The following is a 399-amino-acid chain: Acetate kinase (399 aa).

Asn-7 is a Mg(2+) binding site. ATP is bound at residue Lys-14. Arg-89 lines the substrate pocket. Asp-146 acts as the Proton donor/acceptor in catalysis. ATP contacts are provided by residues 206 to 210, 280 to 282, and 328 to 332; these read HIGSG, DFR, and GIGEN. Residue Glu-382 participates in Mg(2+) binding.

The protein belongs to the acetokinase family. As to quaternary structure, homodimer. It depends on Mg(2+) as a cofactor. The cofactor is Mn(2+).

It localises to the cytoplasm. It carries out the reaction acetate + ATP = acetyl phosphate + ADP. It participates in metabolic intermediate biosynthesis; acetyl-CoA biosynthesis; acetyl-CoA from acetate: step 1/2. In terms of biological role, catalyzes the formation of acetyl phosphate from acetate and ATP. Can also catalyze the reverse reaction. This is Acetate kinase from Campylobacter hominis (strain ATCC BAA-381 / DSM 21671 / CCUG 45161 / LMG 19568 / NCTC 13146 / CH001A).